The sequence spans 869 residues: Probable inorganic carbon transporter subunit DabA (869 aa).

The disordered stretch occupies residues 1-32 (MSTATLEQRAKRGEAPRANDAGHCAHPADGAR). The segment covering 8–17 (QRAKRGEAPR) has biased composition (basic and acidic residues). Cys-376, Asp-378, His-555, and Cys-570 together coordinate Zn(2+).

This sequence belongs to the inorganic carbon transporter (TC 9.A.2) DabA family. Forms a complex with DabB. It depends on Zn(2+) as a cofactor.

It localises to the cell inner membrane. Part of an energy-coupled inorganic carbon pump. The chain is Probable inorganic carbon transporter subunit DabA from Burkholderia multivorans (strain ATCC 17616 / 249).